Consider the following 195-residue polypeptide: Ras-related protein Rab-31 (195 aa).

GTP is bound by residues Gly16, Gly18, Lys19, Ser20, Ser21, Asp32, and His33. Ser20 contributes to the Mg(2+) binding site. 2 consecutive short sequence motifs (switch) follow at residues 30-42 and 63-79; these read HFDHNISPTIGAS and AGQERFHSLAPMYYRGS. At Ser36 the chain carries Phosphoserine. GTP is bound by residues Thr38, Gly64, Asn119, Asp122, Ala150, and Lys151. Thr38 serves as a coordination point for Mg(2+). 2 S-geranylgeranyl cysteine lipidation sites follow: Cys194 and Cys195.

This sequence belongs to the small GTPase superfamily. Rab family. As to quaternary structure, interacts (in GDP-bound form) with RIN3 and GAPVD1, which function as guanine exchange factors (GEF). Interacts (in GTP-bound form) with EEA1. Interacts with NGFR. Interacts with EGFR. Interacts with OCRL. Interacts (in GTP-bound form) with APPL2; interaction contributes to or enhances recruitment of APPL2 to the phagosomes; interaction enhances Fc-gamma receptor-mediated phagocytosis through PI3K/Akt signaling in macrophages. The cofactor is Mg(2+). In terms of tissue distribution, detected in brain astrocytes, spleen and intestine (at protein level).

It localises to the early endosome. Its subcellular location is the golgi apparatus. The protein localises to the trans-Golgi network. It is found in the trans-Golgi network membrane. The protein resides in the cytoplasmic vesicle. It localises to the phagosome. Its subcellular location is the phagosome membrane. The enzyme catalyses GTP + H2O = GDP + phosphate + H(+). With respect to regulation, regulated by guanine nucleotide exchange factors (GEFs) including RIN3 and GAPVD1 which promote the exchange of bound GDP for free GTP. Regulated by GTPase activating proteins (GAPs) which increase the GTP hydrolysis activity. Inhibited by GDP dissociation inhibitors (GDIs) which prevent Rab-GDP dissociation. Its function is as follows. The small GTPases Rab are key regulators of intracellular membrane trafficking, from the formation of transport vesicles to their fusion with membranes. Rabs cycle between an inactive GDP-bound form and an active GTP-bound form that is able to recruit to membranes different set of downstream effectors directly responsible for vesicle formation, movement, tethering and fusion. Required for the integrity and for normal function of the Golgi apparatus and the trans-Golgi network. Plays a role in insulin-stimulated translocation of GLUT4 to the cell membrane. Plays a role in the maturation of phagosomes that engulf pathogens, such as S.aureus and Mycobacterium. Plays a role in M6PR transport from the trans-Golgi network to endosomes. Plays a role in the internalization of EGFR from the cell membrane into endosomes. This Rattus norvegicus (Rat) protein is Ras-related protein Rab-31.